A 529-amino-acid chain; its full sequence is MADSAGLDQPEPSPRPVLVVDFGAQYAQLIARRVREARVFSEVIPHTTSIEEITARDPLAIVLSGGPASVYTEGAPQLDPALFDLGLPVFGICYGFQAMAQVLGGTVARTKTSEYGRTELKVLGGDLHSGLPGVQPVWMSHGDAVTAAPDGFDVAASSSGAPVAAFENRDRRLAGVQYHPEVMHTPHGQQVLSRFLHDFAGLDADWTAANIAGVLVEQVRAQIGNGHAICGLSGGVDSAVAAALVQRAIGDRLTCIFVDHGLLRDGERGQVQRDFVAATGAKLVTVDAAETFLQALSGVTNPEGKRKIIGRQFIRAFEGAVRDLLGDSTFDSGIEFLVQGTLYPDVVESGGGSGTANIKSHHNVGGLPDNLRFKLVEPLRLLFKDEVRAVGRQLDLPEEIVARQPFPGPGLGIRIVGEVTAERLDTLRRADSIAREELTTAGLDYQIWQCPVVLLADVRSVGVQGDNRSYGHPIVLRPVSSEDAMTADWTWVPYEVLECISTRITNEVAEVNRVVLDITNKPPGTIEWE.

The Glutamine amidotransferase type-1 domain occupies 16–205 (PVLVVDFGAQ…LHDFAGLDAD (190 aa)). The Nucleophile role is filled by cysteine 93. Residues histidine 179 and glutamate 181 contribute to the active site. The GMPS ATP-PPase domain maps to 206 to 403 (WTAANIAGVL…LDLPEEIVAR (198 aa)). 233–239 (SGGVDSA) provides a ligand contact to ATP.

Homodimer.

It catalyses the reaction XMP + L-glutamine + ATP + H2O = GMP + L-glutamate + AMP + diphosphate + 2 H(+). Its pathway is purine metabolism; GMP biosynthesis; GMP from XMP (L-Gln route): step 1/1. Its function is as follows. Catalyzes the synthesis of GMP from XMP. This chain is GMP synthase [glutamine-hydrolyzing], found in Mycobacterium leprae (strain Br4923).